Reading from the N-terminus, the 489-residue chain is Probable serine protease EDA2 (489 aa).

The N-terminal stretch at 1–25 is a signal peptide; it reads MSLEFGFILINIFTAIVSFSTLSHA. Asn-35, Asn-51, and Asn-162 each carry an N-linked (GlcNAc...) asparagine glycan. The Charge relay system role is filled by Ser-178. 4 N-linked (GlcNAc...) asparagine glycosylation sites follow: Asn-253, Asn-293, Asn-365, and Asn-406. The Charge relay system role is filled by Asp-410. An N-linked (GlcNAc...) asparagine glycan is attached at Asn-419. Catalysis depends on His-436, which acts as the Charge relay system. Asn-456 is a glycosylation site (N-linked (GlcNAc...) asparagine).

Belongs to the peptidase S28 family.

It is found in the secreted. Functionally, may be involved in a proteolytic pathway controlling the nuclear division phase of megagametogenesis. This Arabidopsis thaliana (Mouse-ear cress) protein is Probable serine protease EDA2 (EDA2).